Consider the following 162-residue polypeptide: Probable metalloprotease y4jG (162 aa).

In terms of domain architecture, MPN spans 9–147 (TVALPRDCVS…YRLDAKANWN (139 aa)). Zn(2+) is bound by residues His-94, His-96, and Asp-107.

This sequence belongs to the peptidase M67B family.

The protein is Probable metalloprotease y4jG of Sinorhizobium fredii (strain NBRC 101917 / NGR234).